Consider the following 153-residue polypeptide: DNA gyrase inhibitor 1 (153 aa).

Belongs to the DNA gyrase inhibitor family. In terms of assembly, interacts with DNA gyrase.

It localises to the cytoplasm. In terms of biological role, inhibits the supercoiling activity of DNA gyrase. Acts by inhibiting DNA gyrase at an early step, prior to (or at the step of) binding of DNA by the gyrase. It protects cells against toxins that target DNA gyrase, by inhibiting activity of these toxins and reducing the formation of lethal double-strand breaks in the cell. This chain is DNA gyrase inhibitor 1, found in Dickeya dadantii (strain 3937) (Erwinia chrysanthemi (strain 3937)).